Here is a 277-residue protein sequence, read N- to C-terminus: Diaminopimelate epimerase (277 aa).

Residues Asn-13, Gln-46, and Asn-66 each coordinate substrate. Cys-75 functions as the Proton donor in the catalytic mechanism. Substrate-binding positions include 76–77 (GN), Asn-160, Asn-193, and 211–212 (ER). Residue Cys-220 is the Proton acceptor of the active site. 221 to 222 (GT) is a binding site for substrate.

It belongs to the diaminopimelate epimerase family. As to quaternary structure, homodimer.

The protein localises to the cytoplasm. The catalysed reaction is (2S,6S)-2,6-diaminopimelate = meso-2,6-diaminopimelate. Its pathway is amino-acid biosynthesis; L-lysine biosynthesis via DAP pathway; DL-2,6-diaminopimelate from LL-2,6-diaminopimelate: step 1/1. Functionally, catalyzes the stereoinversion of LL-2,6-diaminopimelate (L,L-DAP) to meso-diaminopimelate (meso-DAP), a precursor of L-lysine and an essential component of the bacterial peptidoglycan. This is Diaminopimelate epimerase from Saccharophagus degradans (strain 2-40 / ATCC 43961 / DSM 17024).